The chain runs to 622 residues: Polygalacturonase 1 beta-like protein 1 (622 aa).

A signal peptide spans 1–21; sequence MRKQFVFLLPFLSRLYHVVIA. The FXXY 1 repeat unit spans residues 118 to 121; that stretch reads FSVY. Residue asparagine 125 is glycosylated (N-linked (GlcNAc...) asparagine). FXXY repeat units lie at residues 126 to 129, 140 to 143, 154 to 157, 168 to 171, 182 to 185, 196 to 199, 210 to 213, 224 to 227, 239 to 242, 253 to 256, and 267 to 270; these read FTNY, FKKY, FRRY, FTGY, FNSY, FKNY, FKAY, FKTY, FTSY, FSSY, and FSNY. Asparagine 278 carries an N-linked (GlcNAc...) asparagine glycan. 7 FXXY repeats span residues 281–284, 295–298, 309–312, 323–326, 337–340, 351–354, and 365–368; these read FKGY, FKSY, FLNY, FSSY, FVNY, FSGY, and FKTY. Residue asparagine 371 is glycosylated (N-linked (GlcNAc...) asparagine). FXXY repeat units follow at residues 374 to 377 and 384 to 387; these read FKDY and FAKY. N-linked (GlcNAc...) asparagine glycans are attached at residues asparagine 388 and asparagine 461. One can recognise a BURP domain in the interval 407–621; that stretch reads FFRESMLKEG…FENDMNWAIA (215 aa).

Expressed in flowers and stems.

It is found in the secreted. Its subcellular location is the extracellular space. The protein localises to the apoplast. It localises to the cell wall. Its function is as follows. Involved in cell size determination. This Arabidopsis thaliana (Mouse-ear cress) protein is Polygalacturonase 1 beta-like protein 1.